The following is a 514-amino-acid chain: MAMKFIAPMAFVAMQLIIMAAAEDQSAQIMLDSDIEQYLRSNRSLRKVEHSRHDAINIFNVEKYGAVGDGKHDCTEAFSTAWQAACKKPSAMLLVPGNKKFVVNNLFFNGPCQPHFTFKVDGIIAAYQNPASWKNNRIWLQFAKLTGFTLMGKGVIDGQGKQWWAGQCKWVNGREICNDRDRPTAIKFDFSTGLIIQGLKLMNSPEFHLVFGNCEGVKIIGISITAPRDSPNTDGIDIFASKNFHLQKNTIGTGDDCVAIGTGSSNIVIEDLICGPGHGISIGSLGRENSRAEVSYVHVNGAKFIDTQNGLRIKTWQGGSGMASHIIYENVEMINSENPILINQFYCTSASACQNQRSAVQIQDVTYKNIRGTSATAAAIQLKCSDSMPCKDIKLSDISLKLTSGKIASCLNDNANGYFSGHVIPACKNLSPSAKRKESKSHKHPKTVMVKNMGAYDKGNRTRILLGSRPPNCTNKCHGCSPCKAKLVIVHRIMPQEYYPQRWMCSRHGKIYHP.

The signal sequence occupies residues 1-22 (MAMKFIAPMAFVAMQLIIMAAA). The propeptide occupies 23–45 (EDQSAQIMLDSDIEQYLRSNRSL). PbH1 repeat units lie at residues 214–240 (CEGV…DIFA), 241–262 (SKNF…AIGT), 264–284 (SSNI…SIGS), 294–315 (VSYV…RIKT), and 323–344 (ASHI…LINQ). The active-site Proton donor is Asp-255. The active site involves His-278. Residues 434–514 (AKRKESKSHK…CSRHGKIYHP (81 aa)) constitute a propeptide that is removed on maturation. N-linked (GlcNAc...) asparagine glycosylation is found at Asn-460 and Asn-472.

It belongs to the glycosyl hydrolase 28 family.

The protein localises to the secreted. The protein resides in the plastid. It localises to the amyloplast. It is found in the cell wall. The enzyme catalyses (1,4-alpha-D-galacturonosyl)n+m + H2O = (1,4-alpha-D-galacturonosyl)n + (1,4-alpha-D-galacturonosyl)m.. This is Polygalacturonase from Cryptomeria japonica (Japanese cedar).